The sequence spans 348 residues: L-threonine 3-dehydrogenase (348 aa).

Zn(2+) is bound at residue C42. Active-site charge relay system residues include T44 and H47. Residues H67, E68, C97, C100, C103, and C111 each coordinate Zn(2+). NAD(+)-binding positions include L179, E199, R204, 266–268, and 291–292; these read LGL and IT.

The protein belongs to the zinc-containing alcohol dehydrogenase family. Homotetramer. Requires Zn(2+) as cofactor.

The protein resides in the cytoplasm. It carries out the reaction L-threonine + NAD(+) = (2S)-2-amino-3-oxobutanoate + NADH + H(+). Its pathway is amino-acid degradation; L-threonine degradation via oxydo-reductase pathway; glycine from L-threonine: step 1/2. Catalyzes the NAD(+)-dependent oxidation of L-threonine to 2-amino-3-ketobutyrate. To a lesser extent, also catalyzes the oxidation of L-serine, D-threonine, butan-2,3-diol, butan-1,2-diol, and propan-1,2-diol and cannot oxidize other L-amino acids. Cannot utilize NADP(H) instead of NAD(H). This Pyrococcus furiosus (strain ATCC 43587 / DSM 3638 / JCM 8422 / Vc1) protein is L-threonine 3-dehydrogenase.